The sequence spans 172 residues: uncharacterized protein (172 aa).

Positions 1–21 are cleaved as a signal peptide; that stretch reads MMKFKKCLLPVAMLASFTLAG. Cys-22 carries N-palmitoyl cysteine lipidation. Residue Cys-22 is the site of S-diacylglycerol cysteine attachment.

The protein localises to the cell membrane. This is an uncharacterized protein from Escherichia coli O157:H7.